Here is a 307-residue protein sequence, read N- to C-terminus: Leucine-rich repeat-containing protein 25 (307 aa).

An N-terminal signal peptide occupies residues 1-20; sequence MGGPLMWALLLPLLLHQAGS. Topologically, residues 21–168 are extracellular; the sequence is QTSSCSVLSG…SCPSGLTKIA (148 aa). 2 N-linked (GlcNAc...) asparagine glycosylation sites follow: Asn-44 and Asn-56. LRR repeat units follow at residues 63–86 and 87–110; these read SVQLLDLSANGLQRLPWSFFRDLE and QLQLLIVTNNSLDFVDRALXXXGC. N-linked (GlcNAc...) asparagine glycans are attached at residues Asn-95, Asn-132, and Asn-151. The chain crosses the membrane as a helical span at residues 169-189; the sequence is IGALAASGSLLLVLAIAGPVL. The Cytoplasmic portion of the chain corresponds to 190–307; it reads AWRFCRHRMD…DDEEYVVPGR (118 aa). The segment at 205–249 is disordered; the sequence is TWASQDGSRSGSGRQPRYSSQGRRPKSPANTPPRSSTPDYENVFV. A compositionally biased stretch (low complexity) spans 211-226; that stretch reads GSRSGSGRQPRYSSQG. Residues 232-243 are compositionally biased toward polar residues; that stretch reads PANTPPRSSTPD. Position 286 is a phosphotyrosine (Tyr-286).

Interacts with RIGI. Interacts with SQSTM1. Interacts with p65/RELA; this interaction promotes the degradation of RELA through autophagy.

The protein resides in the membrane. Its subcellular location is the cytoplasm. Its function is as follows. Plays a role in the inhibition of RLR-mediated type I interferon signaling pathway by targeting RIGI for autophagic degradation. Interacts specifically with ISG15-associated RIGI to promote interaction between RIGI and the autophagic cargo receptor p62/SQSTM1 to mediate RIGI degradation via selective autophagy. Plays also a role in the inhibition of NF-kappa-B signaling pathway and inflammatory response by promoting the degradation of p65/RELA. The polypeptide is Leucine-rich repeat-containing protein 25 (LRRC25) (Bos taurus (Bovine)).